We begin with the raw amino-acid sequence, 273 residues long: MALKNFNPITPSLRALVQVDKTSVWKGRPFKSLTKGISKTGGRNNHGRITSWHRGGGHKKLYRIIDFKRNKIDISAVVERIEYDPNRTAFIALIKYEDGQYSYILAPQKLSVGDKVISSQDADIKIGNCLPLKFIPIGTTVHNVEMKVGKGGQIARSAGTSVDLVGKDSGYAQIKLRSGEFRLIPLDCKATIGSISNPDQKNINLGKAGRNRWLGWRPHVRGVAMNPVDHPHGGGEGKTSGGRHPVTPWGFPTKGKKTRKNKRTSKFIVKKRK.

A disordered region spans residues 228–273 (VDHPHGGGEGKTSGGRHPVTPWGFPTKGKKTRKNKRTSKFIVKKRK). Residues 254 to 273 (KGKKTRKNKRTSKFIVKKRK) show a composition bias toward basic residues.

This sequence belongs to the universal ribosomal protein uL2 family. Part of the 50S ribosomal subunit. Forms a bridge to the 30S subunit in the 70S ribosome.

In terms of biological role, one of the primary rRNA binding proteins. Required for association of the 30S and 50S subunits to form the 70S ribosome, for tRNA binding and peptide bond formation. It has been suggested to have peptidyltransferase activity; this is somewhat controversial. Makes several contacts with the 16S rRNA in the 70S ribosome. This is Large ribosomal subunit protein uL2 from Rickettsia canadensis (strain McKiel).